Reading from the N-terminus, the 133-residue chain is Small ribosomal subunit protein uS9 (133 aa).

Belongs to the universal ribosomal protein uS9 family.

The protein is Small ribosomal subunit protein uS9 of Picrophilus torridus (strain ATCC 700027 / DSM 9790 / JCM 10055 / NBRC 100828 / KAW 2/3).